The sequence spans 467 residues: Glutamate--tRNA ligase (467 aa).

Positions 9 to 19 (PSPTGYLHIGG) match the 'HIGH' region motif. Residues 237–241 (KLSKR) carry the 'KMSKS' region motif. Residue lysine 240 participates in ATP binding.

This sequence belongs to the class-I aminoacyl-tRNA synthetase family. Glutamate--tRNA ligase type 1 subfamily. Monomer.

Its subcellular location is the cytoplasm. The enzyme catalyses tRNA(Glu) + L-glutamate + ATP = L-glutamyl-tRNA(Glu) + AMP + diphosphate. Catalyzes the attachment of glutamate to tRNA(Glu) in a two-step reaction: glutamate is first activated by ATP to form Glu-AMP and then transferred to the acceptor end of tRNA(Glu). The chain is Glutamate--tRNA ligase from Xanthomonas oryzae pv. oryzae (strain MAFF 311018).